Here is a 62-residue protein sequence, read N- to C-terminus: Large ribosomal subunit protein eL24 (62 aa).

Residues C6, C9, C32, and C36 each contribute to the Zn(2+) site. The segment at 6–36 (CYFCGKMLEPGTGKLYVKKDGSTYFMCSSKC) adopts a C4-type zinc-finger fold.

This sequence belongs to the eukaryotic ribosomal protein eL24 family. In terms of assembly, part of the 50S ribosomal subunit. Forms a cluster with proteins L3 and L14. Zn(2+) is required as a cofactor.

In terms of biological role, binds to the 23S rRNA. This Methanosarcina acetivorans (strain ATCC 35395 / DSM 2834 / JCM 12185 / C2A) protein is Large ribosomal subunit protein eL24.